The chain runs to 367 residues: Glutamate 5-kinase (367 aa).

Lys-10 serves as a coordination point for ATP. Substrate-binding residues include Ser-50, Asp-137, and Asn-149. ATP contacts are provided by residues 169-170 and 211-217; these read TD and TGGMGTK. The region spanning 275–353 is the PUA domain; it reads AGEITVDDGA…QEISEILGYE (79 aa).

The protein belongs to the glutamate 5-kinase family.

Its subcellular location is the cytoplasm. The catalysed reaction is L-glutamate + ATP = L-glutamyl 5-phosphate + ADP. It functions in the pathway amino-acid biosynthesis; L-proline biosynthesis; L-glutamate 5-semialdehyde from L-glutamate: step 1/2. Functionally, catalyzes the transfer of a phosphate group to glutamate to form L-glutamate 5-phosphate. The chain is Glutamate 5-kinase from Serratia proteamaculans (strain 568).